The sequence spans 302 residues: Sulfate adenylyltransferase subunit 2 (302 aa).

It belongs to the PAPS reductase family. CysD subfamily. As to quaternary structure, heterodimer composed of CysD, the smaller subunit, and CysN.

The catalysed reaction is sulfate + ATP + H(+) = adenosine 5'-phosphosulfate + diphosphate. The protein operates within sulfur metabolism; hydrogen sulfide biosynthesis; sulfite from sulfate: step 1/3. Its function is as follows. With CysN forms the ATP sulfurylase (ATPS) that catalyzes the adenylation of sulfate producing adenosine 5'-phosphosulfate (APS) and diphosphate, the first enzymatic step in sulfur assimilation pathway. APS synthesis involves the formation of a high-energy phosphoric-sulfuric acid anhydride bond driven by GTP hydrolysis by CysN coupled to ATP hydrolysis by CysD. The protein is Sulfate adenylyltransferase subunit 2 of Shigella dysenteriae serotype 1 (strain Sd197).